The primary structure comprises 561 residues: DNA ligase B (561 aa).

Residue K125 is the N6-AMP-lysine intermediate of the active site.

It belongs to the NAD-dependent DNA ligase family. LigB subfamily.

It carries out the reaction NAD(+) + (deoxyribonucleotide)n-3'-hydroxyl + 5'-phospho-(deoxyribonucleotide)m = (deoxyribonucleotide)n+m + AMP + beta-nicotinamide D-nucleotide.. Functionally, catalyzes the formation of phosphodiester linkages between 5'-phosphoryl and 3'-hydroxyl groups in double-stranded DNA using NAD as a coenzyme and as the energy source for the reaction. The chain is DNA ligase B from Salmonella paratyphi B (strain ATCC BAA-1250 / SPB7).